A 201-amino-acid chain; its full sequence is Holliday junction resolvase RecU (201 aa).

Positions 85, 87, 100, and 119 each coordinate Mg(2+).

This sequence belongs to the RecU family. Mg(2+) serves as cofactor.

The protein localises to the cytoplasm. The enzyme catalyses Endonucleolytic cleavage at a junction such as a reciprocal single-stranded crossover between two homologous DNA duplexes (Holliday junction).. Its function is as follows. Endonuclease that resolves Holliday junction intermediates in genetic recombination. Cleaves mobile four-strand junctions by introducing symmetrical nicks in paired strands. Promotes annealing of linear ssDNA with homologous dsDNA. Required for DNA repair, homologous recombination and chromosome segregation. The chain is Holliday junction resolvase RecU from Geobacillus sp. (strain WCH70).